The following is a 94-amino-acid chain: Small ribosomal subunit protein bS16 (94 aa).

Belongs to the bacterial ribosomal protein bS16 family.

This is Small ribosomal subunit protein bS16 from Thermosipho africanus (strain TCF52B).